Here is a 218-residue protein sequence, read N- to C-terminus: Runt-related transcription factor 2 (218 aa).

The 129-residue stretch at 67–195 (RGHKFYLEKK…TVDGPREPRR (129 aa)) folds into the Runt domain. Residues 122–138 (VMAGNDENYSAELRNAS) are required for interaction with FOXO1. Residues 189–218 (GPREPRRHRQKLDDSKPSLFSDRLSDLGRI) form a disordered region. Residue K204 forms a Glycyl lysine isopeptide (Lys-Gly) (interchain with G-Cter in SUMO2) linkage.

Heterodimer of an alpha and a beta subunit. The alpha subunit binds DNA as a monomer and through the Runt domain. DNA-binding is increased by heterodimerization. Interacts with XRCC6 (Ku70) and XRCC5 (Ku80). Interacts with CCNB1, KAT6A and KAT6B. Interacts with HIVEP3. Interacts with IFI204. Interaction with SATB2; the interaction results in enhanced DNA binding and transactivation by these transcription factors. Binds to HIPK3. Interacts with FOXO1 (via a C-terminal region); the interaction inhibits RUNX2 transcriptional activity towards BGLAP. Interacts with FOXP3. Interacts with TMEM119. Interacts with OLFM2. Interacts with IPO7; the interaction inhibits RUNX2 nuclear translocation in osteoblasts. In terms of processing, phosphorylated; probably by MAP kinases (MAPK). Phosphorylation by HIPK3 is required for the SPEN/MINT and FGF2 transactivation during osteoblastic differentiation.

It is found in the nucleus. The protein resides in the cytoplasm. Functionally, transcription factor involved in osteoblastic differentiation and skeletal morphogenesis. Essential for the maturation of osteoblasts and both intramembranous and endochondral ossification. CBF binds to the core site, 5'-PYGPYGGT-3', of a number of enhancers and promoters, including murine leukemia virus, polyomavirus enhancer, T-cell receptor enhancers, osteocalcin, osteopontin, bone sialoprotein, alpha 1(I) collagen, LCK, IL-3 and GM-CSF promoters. Inhibits KAT6B-dependent transcriptional activation. In osteoblasts, supports transcription activation: synergizes with SPEN/MINT to enhance FGFR2-mediated activation of the osteocalcin FGF-responsive element (OCFRE). The protein is Runt-related transcription factor 2 (Runx2) of Rattus norvegicus (Rat).